The primary structure comprises 162 residues: RNA pyrophosphohydrolase (162 aa).

The region spanning 7-149 (EYRPCVGIML…KKEVYKKVIE (143 aa)) is the Nudix hydrolase domain. Positions 40–61 (GGVDEGEELEQAALRELLEEVG) match the Nudix box motif.

This sequence belongs to the Nudix hydrolase family. RppH subfamily. It depends on a divalent metal cation as a cofactor.

Its function is as follows. Accelerates the degradation of transcripts by removing pyrophosphate from the 5'-end of triphosphorylated RNA, leading to a more labile monophosphorylated state that can stimulate subsequent ribonuclease cleavage. The sequence is that of RNA pyrophosphohydrolase from Wolbachia pipientis subsp. Culex pipiens (strain wPip).